Reading from the N-terminus, the 778-residue chain is Transcription factor kayak (778 aa).

Composition is skewed to low complexity over residues 24 to 54 and 77 to 98; these read AQQL…HTQQ and QYYQ…QRQL. Disordered stretches follow at residues 24–57, 76–130, 183–223, 294–320, 356–414, and 427–478; these read AQQL…QNGL, NQYY…HQLR, QPTA…TTNG, APLV…VLAS, ASVM…GTGG, and RNTN…RKRR. The segment covering 99 to 108 has biased composition (polar residues); the sequence is PTQQPAASYE. 2 stretches are compositionally biased toward low complexity: residues 109 to 130 and 183 to 222; these read QQQQ…HQLR and QPTA…TTTN. Residues 382–402 are compositionally biased toward low complexity; that stretch reads ISDTSSGATDSTSYQNGHMMG. The span at 403 to 414 shows a compositional bias: gly residues; that stretch reads NSGGGNGGGTGG. Positions 427-436 are enriched in polar residues; it reads RNTNTSNSAT. The region spanning 457–520 is the bZIP domain; the sequence is EEKRRIRRER…NQLEYFLQAH (64 aa). The segment at 459–478 is basic motif; the sequence is KRRIRRERNKQAAARCRKRR. The interval 485-513 is leucine-zipper; the sequence is LTEEVELLEKRGENLKKEMELLNETKNQL. A compositionally biased stretch (low complexity) spans 550–571; it reads GSCGSGSSHHNNNSNSNDSSSG. 2 disordered regions span residues 550–594 and 756–778; these read GSCG…DLKP and TSQN…LVSL. The span at 579–589 shows a compositional bias: polar residues; that stretch reads TLNSTGRSNSP. A Phosphoserine modification is found at Ser-588.

It belongs to the bZIP family. Fos subfamily. As to quaternary structure, homodimer. Heterodimer with Jra. The kay-Jra heterodimer binds more stably to the AP-1 site than either of the two proteins alone.

The protein resides in the nucleus. Its function is as follows. Developmentally regulated transcription factor AP-1 binds and recognizes the enhancer DNA sequence: 5'-TGA[CG]TCA-3'. May play a role in the function or determination of a particular subset of cells in the developing embryo. It is able to carry out its function either independently of or in conjunction with Jra. The polypeptide is Transcription factor kayak (Drosophila pseudoobscura pseudoobscura (Fruit fly)).